The chain runs to 140 residues: Chromatin accessibility complex 16kD protein (140 aa).

The segment at 111-140 (LNRSAGSDDDDDDDDDDDEEESESESESDE) is disordered. A compositionally biased stretch (acidic residues) spans 117 to 140 (SDDDDDDDDDDDEEESESESESDE).

In terms of assembly, component of the chromatin accessibility complex (CHRAC), composed of Chrac-14, Chrac-16, Acf and Iswi. Forms a heterodimer with Chrac-14. The Chrac-14/Chrac-16 heterodimer interacts with Acf (via N-terminus). Stabilizes the interaction between Chrac-14 and Iswi.

It localises to the nucleus. Its function is as follows. Histone-like protein which promotes nucleosome sliding of ATP-dependent nucleosome remodeling complexes. Part of the chromatin-accessibility complex (CHRAC) which uses energy/ATP to increase the general accessibility of DNA in chromatin. As a heterodimer with Chrac-14, binds DNA and facilitates nucleosome sliding by Acf. As part of the CHRAC complex, required for oogenesis. The protein is Chromatin accessibility complex 16kD protein of Drosophila melanogaster (Fruit fly).